Here is a 641-residue protein sequence, read N- to C-terminus: Mediator of RNA polymerase II transcription subunit 17 (641 aa).

A coiled-coil region spans residues 159–186 (RLQSFNAAADKLLKSAARLETEVASETR).

This sequence belongs to the Mediator complex subunit 17 family. Component of the Mediator complex.

The protein localises to the nucleus. Its function is as follows. Component of the Mediator complex, a coactivator involved in the regulated transcription of nearly all RNA polymerase II-dependent genes. Mediator functions as a bridge to convey information from gene-specific regulatory proteins to the basal RNA polymerase II transcription machinery. Mediator is recruited to promoters by direct interactions with regulatory proteins and serves as a scaffold for the assembly of a functional preinitiation complex with RNA polymerase II and the general transcription factors. The sequence is that of Mediator of RNA polymerase II transcription subunit 17 (srb4) from Aspergillus clavatus (strain ATCC 1007 / CBS 513.65 / DSM 816 / NCTC 3887 / NRRL 1 / QM 1276 / 107).